Reading from the N-terminus, the 475-residue chain is Aspartyl/glutamyl-tRNA(Asn/Gln) amidotransferase subunit B (475 aa).

Belongs to the GatB/GatE family. GatB subfamily. In terms of assembly, heterotrimer of A, B and C subunits.

The catalysed reaction is L-glutamyl-tRNA(Gln) + L-glutamine + ATP + H2O = L-glutaminyl-tRNA(Gln) + L-glutamate + ADP + phosphate + H(+). It carries out the reaction L-aspartyl-tRNA(Asn) + L-glutamine + ATP + H2O = L-asparaginyl-tRNA(Asn) + L-glutamate + ADP + phosphate + 2 H(+). Functionally, allows the formation of correctly charged Asn-tRNA(Asn) or Gln-tRNA(Gln) through the transamidation of misacylated Asp-tRNA(Asn) or Glu-tRNA(Gln) in organisms which lack either or both of asparaginyl-tRNA or glutaminyl-tRNA synthetases. The reaction takes place in the presence of glutamine and ATP through an activated phospho-Asp-tRNA(Asn) or phospho-Glu-tRNA(Gln). In Staphylococcus haemolyticus (strain JCSC1435), this protein is Aspartyl/glutamyl-tRNA(Asn/Gln) amidotransferase subunit B.